A 406-amino-acid polypeptide reads, in one-letter code: Tryptophan 2,3-dioxygenase (406 aa).

Serine 19 is subject to Phosphoserine. Residues 72–76 (FIITH) and arginine 144 each bind substrate. Histidine 328 contacts heme. A substrate-binding site is contributed by threonine 342.

Belongs to the tryptophan 2,3-dioxygenase family. As to quaternary structure, homotetramer. Dimer of dimers. Requires heme as cofactor.

It carries out the reaction L-tryptophan + O2 = N-formyl-L-kynurenine. It functions in the pathway amino-acid degradation; L-tryptophan degradation via kynurenine pathway; L-kynurenine from L-tryptophan: step 1/2. Its function is as follows. Heme-dependent dioxygenase that catalyzes the oxidative cleavage of the L-tryptophan (L-Trp) pyrrole ring and converts L-tryptophan to N-formyl-L-kynurenine. Catalyzes the oxidative cleavage of the indole moiety. The protein is Tryptophan 2,3-dioxygenase of Mus musculus (Mouse).